The chain runs to 224 residues: Retinoschisin (224 aa).

The N-terminal stretch at 1-23 (MSRKIEGFLLLLLFGYEATLGLS) is a signal peptide. Residues 63-219 (CPYHKPLGFE…IAIRMELLEC (157 aa)) form the F5/8 type C domain. Cystine bridges form between cysteine 63/cysteine 219 and cysteine 110/cysteine 142.

Homooctamer of 4 homodimers; disulfide-linked. The homooctamer has a flat, cogwheel structure with a diameter of about 14 nm. Two stacked octamers can assemble to form a hexadecamer. As to expression, restricted to the retina (at protein level). Detected in the inner segment of the photoreceptors, the inner nuclear layer, the inner plexiform layer and the ganglion cell layer (at protein level). At the macula, expressed in both the outer and inner nuclear layers and in the inner plexiform layer (at protein level). Detected in retina. Detected only within the photoreceptor cell layer, most prominently within the inner segments of the photoreceptors. Undetectable in the inner plexiform layers and the inner nuclear layer.

It localises to the secreted. Its subcellular location is the cell membrane. In terms of biological role, binds negatively charged membrane lipids, such as phosphatidylserine and phosphoinositides. May play a role in cell-cell adhesion processes in the retina, via homomeric interaction between octamers present on the surface of two neighboring cells. Required for normal structure and function of the retina. The protein is Retinoschisin (RS1) of Homo sapiens (Human).